We begin with the raw amino-acid sequence, 176 residues long: Ribosome rescue factor SmrB (176 aa).

A Smr domain is found at 98 to 173 (LDLHGLTQMQ…GTAAILLLVE (76 aa)).

Belongs to the SmrB family. In terms of assembly, associates with collided ribosomes, but not with correctly translating polysomes.

Acts as a ribosome collision sensor. Detects stalled/collided disomes (pairs of ribosomes where the leading ribosome is stalled and a second ribosome has collided with it) and endonucleolytically cleaves mRNA at the 5' boundary of the stalled ribosome. Stalled/collided disomes form a new interface (primarily via the 30S subunits) that binds SmrB. Cleaved mRNA becomes available for tmRNA ligation, leading to ribosomal subunit dissociation and rescue of stalled ribosomes. The sequence is that of Ribosome rescue factor SmrB from Serratia proteamaculans (strain 568).